Here is a 422-residue protein sequence, read N- to C-terminus: CinA-like protein (422 aa).

It belongs to the CinA family.

The polypeptide is CinA-like protein (Mycolicibacterium vanbaalenii (strain DSM 7251 / JCM 13017 / BCRC 16820 / KCTC 9966 / NRRL B-24157 / PYR-1) (Mycobacterium vanbaalenii)).